We begin with the raw amino-acid sequence, 709 residues long: Polyribonucleotide nucleotidyltransferase (709 aa).

The Mg(2+) site is built by D489 and D495. One can recognise a KH domain in the interval 556–615 (PKIDMIKIDVDKIKVVIGKGGETIDKIIAETGVKIDIDEEGNVSIFSSDQAAIDRTKDII). Positions 625–693 (GEVYHAKVVR…DKGRVDASMK (69 aa)) constitute an S1 motif domain.

The protein belongs to the polyribonucleotide nucleotidyltransferase family. Mg(2+) is required as a cofactor.

The protein localises to the cytoplasm. It carries out the reaction RNA(n+1) + phosphate = RNA(n) + a ribonucleoside 5'-diphosphate. Its function is as follows. Involved in mRNA degradation. Catalyzes the phosphorolysis of single-stranded polyribonucleotides processively in the 3'- to 5'-direction. The protein is Polyribonucleotide nucleotidyltransferase of Streptococcus agalactiae serotype V (strain ATCC BAA-611 / 2603 V/R).